The primary structure comprises 144 residues: MINSILVVCIGNICRSPTGERLLKAALPERKIASAGLKAMVGGSADETASIVANEHGVSLQDHVAQQLTADMCRDSDLILVMEKKHIDLVCRINPSVRGKTMLFGHWINQQEIADPYKKSRDAFEAVYGVLENAAQKWVNALSR.

Residue cysteine 9 is the Nucleophile of the active site. Residue arginine 15 is part of the active site. Residue aspartate 115 is the Proton donor of the active site.

This sequence belongs to the low molecular weight phosphotyrosine protein phosphatase family.

The enzyme catalyses O-phospho-L-tyrosyl-[protein] + H2O = L-tyrosyl-[protein] + phosphate. In terms of biological role, may function as a phosphatase required for amylovoran (an exopolysaccharide that functions as a virulence factor) production. The polypeptide is Probable low molecular weight protein-tyrosine-phosphatase AmsI (amsI) (Erwinia amylovora (Fire blight bacteria)).